The sequence spans 688 residues: UvrABC system protein B (688 aa).

Positions 31–188 (GRVNAGEPDV…RKFVSMQYQR (158 aa)) constitute a Helicase ATP-binding domain. Position 44 to 51 (44 to 51 (GATGTGKS)) interacts with ATP. The Beta-hairpin signature appears at 97 to 120 (YYDYYQPEAYVPQTDTFIEKDSSV). Residues 434-587 (QIDDLLEQIR…QVAYNTEHGI (154 aa)) form the Helicase C-terminal domain. The tract at residues 607–632 (GEDTKKMLEGRGGGKRSPTPNLRREG) is disordered. The UVR domain occupies 642–677 (ETIISDLNDQMLQAAGELKFELAARLRDELGDLKRE).

This sequence belongs to the UvrB family. As to quaternary structure, forms a heterotetramer with UvrA during the search for lesions. Interacts with UvrC in an incision complex.

The protein resides in the cytoplasm. The UvrABC repair system catalyzes the recognition and processing of DNA lesions. A damage recognition complex composed of 2 UvrA and 2 UvrB subunits scans DNA for abnormalities. Upon binding of the UvrA(2)B(2) complex to a putative damaged site, the DNA wraps around one UvrB monomer. DNA wrap is dependent on ATP binding by UvrB and probably causes local melting of the DNA helix, facilitating insertion of UvrB beta-hairpin between the DNA strands. Then UvrB probes one DNA strand for the presence of a lesion. If a lesion is found the UvrA subunits dissociate and the UvrB-DNA preincision complex is formed. This complex is subsequently bound by UvrC and the second UvrB is released. If no lesion is found, the DNA wraps around the other UvrB subunit that will check the other stand for damage. The sequence is that of UvrABC system protein B from Clavibacter sepedonicus (Clavibacter michiganensis subsp. sepedonicus).